The sequence spans 715 residues: Polyribonucleotide nucleotidyltransferase (715 aa).

Residues aspartate 493 and aspartate 499 each coordinate Mg(2+). In terms of domain architecture, KH spans 560 to 619 (PRMITIKINPEKIRDVIGKGGSVIRALTEETGTTIDISDDGVVTIASTSSEGMAEAKKRI). One can recognise an S1 motif domain in the interval 629 to 697 (GQVYEGTVLK…EKGRVRLSAK (69 aa)).

The protein belongs to the polyribonucleotide nucleotidyltransferase family. It depends on Mg(2+) as a cofactor.

It is found in the cytoplasm. The catalysed reaction is RNA(n+1) + phosphate = RNA(n) + a ribonucleoside 5'-diphosphate. Involved in mRNA degradation. Catalyzes the phosphorolysis of single-stranded polyribonucleotides processively in the 3'- to 5'-direction. This Burkholderia vietnamiensis (strain G4 / LMG 22486) (Burkholderia cepacia (strain R1808)) protein is Polyribonucleotide nucleotidyltransferase.